Reading from the N-terminus, the 223-residue chain is Neurotrophic factor BDNF precursor form (223 aa).

A signal peptide spans 1-5; it reads SCMKA. Positions 6 to 114 are excised as a propeptide; that stretch reads APMKEVSIRG…AANMSMRVRR (109 aa). An N-linked (GlcNAc...) asparagine glycan is attached at asparagine 107. Cystine bridges form between cysteine 127-cysteine 194 and cysteine 172-cysteine 223.

Belongs to the NGF-beta family.

The protein localises to the secreted. Its function is as follows. Promotes the survival of neuronal populations that are all located either in the central nervous system or directly connected to it. In Aspidites melanocephalus (Black-headed python), this protein is Neurotrophic factor BDNF precursor form (BDNF).